The primary structure comprises 95 residues: DNA-directed RNA polymerase subunit Rpo11 (95 aa).

This sequence belongs to the archaeal Rpo11/eukaryotic RPB11/RPC19 RNA polymerase subunit family. As to quaternary structure, part of the RNA polymerase complex.

It is found in the cytoplasm. The enzyme catalyses RNA(n) + a ribonucleoside 5'-triphosphate = RNA(n+1) + diphosphate. In terms of biological role, DNA-dependent RNA polymerase (RNAP) catalyzes the transcription of DNA into RNA using the four ribonucleoside triphosphates as substrates. The polypeptide is DNA-directed RNA polymerase subunit Rpo11 (Thermococcus onnurineus (strain NA1)).